The chain runs to 517 residues: MQDVATEAAKRRTFAIISHPDAGKTTLTEKLLYYGGAIQMAGSVKGRKSKAHATSDWMAMEQERGISVTSSVMQFPYRERILNLLDTPGHGDFSEDTYRTLTAVDSALMVIDIAKGVEERTVQLMDVCRMRDTPITTFINKLDRDGRDPVEVLDEVESVLRIRCAPVTWPLGMGRGFRGVYHLHLDQVRLFMDREIIQGLDNPRLDELFPGEVDEWREQIELVREASDSFDPEAYLAGQLTPVYFGSAVNDFGIRELLDDFVEHAPAPRSRDAGREVRADEENFTGFVFKIQANMDPQHRDRIAFLRVCSGRFEPGMKLYQVRTGKNMKIPRATTFMASDRSHAETAAPGDIIGIHNHGTIIIGDAFTEGESLHFTGIPDFAPELFRRVVLRDPMRMKALQKGLEQLCEEGATQLFRPLLGSDWIVGAVGTLQFDVAAYRLQKEYGVECTFEGVQVYTARWVSAEDEKALQRFRDRNESALAWDGTGALAYLAPTRANLELTQERWPDIRFLATRDR.

Positions alanine 9 to arginine 269 constitute a tr-type G domain. GTP contacts are provided by residues serine 18 to threonine 25, aspartate 86 to histidine 90, and asparagine 140 to aspartate 143.

The protein belongs to the TRAFAC class translation factor GTPase superfamily. Classic translation factor GTPase family. PrfC subfamily.

It is found in the cytoplasm. Functionally, increases the formation of ribosomal termination complexes and stimulates activities of RF-1 and RF-2. It binds guanine nucleotides and has strong preference for UGA stop codons. It may interact directly with the ribosome. The stimulation of RF-1 and RF-2 is significantly reduced by GTP and GDP, but not by GMP. The chain is Peptide chain release factor 3 from Halorhodospira halophila (strain DSM 244 / SL1) (Ectothiorhodospira halophila (strain DSM 244 / SL1)).